A 215-amino-acid chain; its full sequence is Cytochrome b6 (215 aa).

The chain crosses the membrane as a helical span at residues 32-52 (IFYCLGGITLTCFLVQVATGF). Heme c is bound at residue C35. Heme b-binding residues include H86 and H100. The next 3 helical transmembrane spans lie at 90-110 (ASMM…TGGF), 116-136 (LTWV…VTGY), and 186-206 (LHTF…FLMI). Positions 187 and 202 each coordinate heme b.

It belongs to the cytochrome b family. PetB subfamily. In terms of assembly, the 4 large subunits of the cytochrome b6-f complex are cytochrome b6, subunit IV (17 kDa polypeptide, PetD), cytochrome f and the Rieske protein, while the 4 small subunits are PetG, PetL, PetM and PetN. The complex functions as a dimer. It depends on heme b as a cofactor. Requires heme c as cofactor.

It localises to the plastid. It is found in the chloroplast thylakoid membrane. Its function is as follows. Component of the cytochrome b6-f complex, which mediates electron transfer between photosystem II (PSII) and photosystem I (PSI), cyclic electron flow around PSI, and state transitions. This chain is Cytochrome b6, found in Nicotiana tabacum (Common tobacco).